Consider the following 584-residue polypeptide: Long-chain-fatty-acid--AMP ligase FadD23 (584 aa).

The next 2 helical transmembrane spans lie at 199–219 (YFAD…WLPF) and 225–245 (LVLG…TSPV).

This sequence belongs to the ATP-dependent AMP-binding enzyme family.

It localises to the membrane. It catalyses the reaction holo-[(hydroxy)phthioceranic acid synthase] + hexadecanoate + ATP = hexadecanoyl-[(hydroxy)phthioceranic acid synthase] + AMP + diphosphate. The catalysed reaction is holo-[(hydroxy)phthioceranic acid synthase] + octadecanoate + ATP = octadecanoyl-[(hydroxy)phthioceranic acid synthase] + AMP + diphosphate. The protein operates within lipid metabolism; fatty acid biosynthesis. Functionally, catalyzes the activation of long-chain fatty acids as acyl-adenylates (acyl-AMP), which are then transferred to the multifunctional polyketide synthase (PKS) type III for further chain extension. Involved in the biosynthesis of sulfolipid 1 (SL-1). In Mycobacterium bovis (strain ATCC BAA-935 / AF2122/97), this protein is Long-chain-fatty-acid--AMP ligase FadD23 (fadD23).